A 198-amino-acid polypeptide reads, in one-letter code: Syndecan-4 (198 aa).

Positions 1–23 (MAPACLLAPLLLLLLGGFPLVPG) are cleaved as a signal peptide. The Extracellular portion of the chain corresponds to 24-145 (ESIRETEVID…QGSNIFERTE (122 aa)). 2 disordered regions span residues 42–76 (YFSG…PRPF) and 94–130 (AQPG…NKVS). 3 O-linked (Xyl...) (glycosaminoglycan) serine glycosylation sites follow: Ser-44, Ser-62, and Ser-64. A compositionally biased stretch (acidic residues) spans 48 to 71 (PDDEDAGGSDDFELSGSGDLDDTE). Residues 102-118 (SEPKELEENEVIPKRAP) are compositionally biased toward basic and acidic residues. A helical transmembrane segment spans residues 146–170 (VLAALIVGGVVGILFAVFLILLLVY). Residues 171 to 198 (RMKKKDEGSYDLGKKPIYKKAPTNEFYA) are Cytoplasmic-facing.

Belongs to the syndecan proteoglycan family. As to quaternary structure, homodimer. Interacts with CDCP1 and SDCBP. Interacts (via its cytoplasmic domain) with GIPC (via its PDZ domain). Interacts (via its cytoplasmic domain) with NUDT16L1. Interacts with DNM2; this interaction is markedly enhanced at focal ahesion site upon induction of focal adhesions and stress-fiber formation. Post-translationally, shedding is enhanced by a number of factors such as heparanase, thrombin or EGF. Also by stress and wound healing. PMA-mediated shedding is inhibited by TIMP3. O-glycosylated; contains both chondroitin sulfate and heparan sulfate. Ser-44, Ser-62 and Ser-64 can all be modified by either chondroitin sulfate or heparan sulfate, and the protein exists in forms that contain only chondroitin sulfate, only heparan sulfate and both chondroitin sulfate and heparan sulfate. As to expression, ubiquitous. Highest levels in liver, kidney and lung.

It localises to the membrane. It is found in the secreted. Functionally, cell surface proteoglycan which regulates exosome biogenesis in concert with SDCBP and PDCD6IP. The sequence is that of Syndecan-4 from Mus musculus (Mouse).